Reading from the N-terminus, the 237-residue chain is Class B acid phosphatase (237 aa).

An N-terminal signal peptide occupies residues 1-23; the sequence is MRKVTLTLSAIALALSLNGAAMA. The active-site Nucleophile is the D69. D69 and D71 together coordinate Mg(2+). D71 acts as the Proton donor in catalysis. Substrate contacts are provided by residues 137-138 and K177; that span reads TG. A Mg(2+)-binding site is contributed by D192.

It belongs to the class B bacterial acid phosphatase family. Homotetramer. Requires Mg(2+) as cofactor.

It is found in the periplasm. The catalysed reaction is a phosphate monoester + H2O = an alcohol + phosphate. Its function is as follows. Dephosphorylates several organic phosphate monoesters. Also has a phosphotransferase activity catalyzing the transfer of low-energy phosphate groups from organic phosphate monoesters to free hydroxyl groups of various organic compounds. This Proteus mirabilis (strain HI4320) protein is Class B acid phosphatase.